The sequence spans 193 residues: 7-methyl-GTP pyrophosphatase (193 aa).

Catalysis depends on Asp-70, which acts as the Proton acceptor.

The protein belongs to the Maf family. YceF subfamily. A divalent metal cation is required as a cofactor.

It is found in the cytoplasm. It carries out the reaction N(7)-methyl-GTP + H2O = N(7)-methyl-GMP + diphosphate + H(+). Functionally, nucleoside triphosphate pyrophosphatase that hydrolyzes 7-methyl-GTP (m(7)GTP). May have a dual role in cell division arrest and in preventing the incorporation of modified nucleotides into cellular nucleic acids. The chain is 7-methyl-GTP pyrophosphatase from Photobacterium profundum (strain SS9).